A 258-amino-acid polypeptide reads, in one-letter code: UPF0246 protein YE0603 (258 aa).

It belongs to the UPF0246 family.

The protein is UPF0246 protein YE0603 of Yersinia enterocolitica serotype O:8 / biotype 1B (strain NCTC 13174 / 8081).